A 259-amino-acid polypeptide reads, in one-letter code: Undecaprenyl-diphosphatase 3 (259 aa).

8 consecutive transmembrane segments (helical) span residues 1–21, 39–59, 71–91, 99–119, 133–153, 174–194, 208–228, and 236–256; these read MNWL…FLPI, AGLF…FIYY, FSKL…IGLL, ISKT…FLYM, ITYK…FPAI, AYFS…LQFV, SLIV…SWMI, and LKVF…LQFT.

This sequence belongs to the UppP family.

The protein resides in the cell membrane. The catalysed reaction is di-trans,octa-cis-undecaprenyl diphosphate + H2O = di-trans,octa-cis-undecaprenyl phosphate + phosphate + H(+). In terms of biological role, catalyzes the dephosphorylation of undecaprenyl diphosphate (UPP). Confers resistance to bacitracin. The sequence is that of Undecaprenyl-diphosphatase 3 from Bacillus cereus (strain ATCC 10987 / NRS 248).